Here is a 519-residue protein sequence, read N- to C-terminus: Chaperone SurA (519 aa).

The signal sequence occupies residues 1 to 31 (MMRSLHSLRRMSGTVLALMLAAGLPLSAAQA). Composition is skewed to low complexity over residues 31–45 (AQPA…QKPA) and 197–207 (PAAAQATRAPA). 2 disordered regions span residues 31–50 (AQPA…PAPS) and 196–221 (NPAA…PAQS). The region spanning 223-324 (PAMLVLAQIL…NGFHILKVVD (102 aa)) is the PpiC 1 domain. The tract at residues 328–361 (GGQPAQAARPAPAPAPQQPSSFQEGPSVAAPQGP) is disordered. Residues 364 to 463 (VTQTHARHIL…FGWHLIQVLE (100 aa)) enclose the PpiC 2 domain.

The protein resides in the periplasm. It catalyses the reaction [protein]-peptidylproline (omega=180) = [protein]-peptidylproline (omega=0). Chaperone involved in the correct folding and assembly of outer membrane proteins. Recognizes specific patterns of aromatic residues and the orientation of their side chains, which are found more frequently in integral outer membrane proteins. May act in both early periplasmic and late outer membrane-associated steps of protein maturation. This chain is Chaperone SurA, found in Bordetella bronchiseptica (strain ATCC BAA-588 / NCTC 13252 / RB50) (Alcaligenes bronchisepticus).